We begin with the raw amino-acid sequence, 207 residues long: Phosphoenolpyruvate guanylyltransferase (207 aa).

Residues threonine 137, glycine 153, and serine 156 each contribute to the phosphoenolpyruvate site.

This sequence belongs to the CofC family.

The catalysed reaction is phosphoenolpyruvate + GTP + H(+) = enolpyruvoyl-2-diphospho-5'-guanosine + diphosphate. It participates in cofactor biosynthesis; coenzyme F420 biosynthesis. Its function is as follows. Guanylyltransferase that catalyzes the activation of phosphoenolpyruvate (PEP) as enolpyruvoyl-2-diphospho-5'-guanosine, via the condensation of PEP with GTP. It is involved in the biosynthesis of coenzyme F420, a hydride carrier cofactor. The sequence is that of Phosphoenolpyruvate guanylyltransferase from Sphaerobacter thermophilus (strain ATCC 49802 / DSM 20745 / KCCM 41009 / NCIMB 13125 / S 6022).